The chain runs to 364 residues: Uroporphyrinogen decarboxylase (364 aa).

Residues 28–32, D78, Y160, T215, and H333 each bind substrate; that span reads RQAGR.

Belongs to the uroporphyrinogen decarboxylase family. Homodimer.

It localises to the cytoplasm. It catalyses the reaction uroporphyrinogen III + 4 H(+) = coproporphyrinogen III + 4 CO2. It participates in porphyrin-containing compound metabolism; protoporphyrin-IX biosynthesis; coproporphyrinogen-III from 5-aminolevulinate: step 4/4. Its function is as follows. Catalyzes the decarboxylation of four acetate groups of uroporphyrinogen-III to yield coproporphyrinogen-III. The sequence is that of Uroporphyrinogen decarboxylase from Burkholderia mallei (strain NCTC 10247).